The following is a 732-amino-acid chain: Non-structural protein 4 (732 aa).

Composition is skewed to polar residues over residues 13-23 (KNKGIQQNQWH) and 31-56 (LSGQ…NSKS). 2 disordered regions span residues 13–74 (KNKG…NSAA) and 706–732 (LGRN…KQKE). Residues 719-732 (QVEEAENEEEKQKE) are compositionally biased toward acidic residues.

This chain is Non-structural protein 4, found in Catharanthus roseus (Madagascar periwinkle).